A 407-amino-acid chain; its full sequence is Formate-dependent phosphoribosylglycinamide formyltransferase (407 aa).

N(1)-(5-phospho-beta-D-ribosyl)glycinamide contacts are provided by residues 28 to 29 and Glu-88; that span reads EL. Residues Arg-121, Lys-162, 167-172, 202-205, and Glu-210 contribute to the ATP site; these read SSGKGQ and EGFI. The 195-residue stretch at 126-320 folds into the ATP-grasp domain; the sequence is RLAAEELGVA…EFELHAKAIL (195 aa). Residues Glu-279 and Glu-291 each contribute to the Mg(2+) site. N(1)-(5-phospho-beta-D-ribosyl)glycinamide is bound by residues Asp-298, Lys-367, and 374–375; that span reads RR.

The protein belongs to the PurK/PurT family. In terms of assembly, homodimer.

It carries out the reaction N(1)-(5-phospho-beta-D-ribosyl)glycinamide + formate + ATP = N(2)-formyl-N(1)-(5-phospho-beta-D-ribosyl)glycinamide + ADP + phosphate + H(+). Its pathway is purine metabolism; IMP biosynthesis via de novo pathway; N(2)-formyl-N(1)-(5-phospho-D-ribosyl)glycinamide from N(1)-(5-phospho-D-ribosyl)glycinamide (formate route): step 1/1. Functionally, involved in the de novo purine biosynthesis. Catalyzes the transfer of formate to 5-phospho-ribosyl-glycinamide (GAR), producing 5-phospho-ribosyl-N-formylglycinamide (FGAR). Formate is provided by PurU via hydrolysis of 10-formyl-tetrahydrofolate. The protein is Formate-dependent phosphoribosylglycinamide formyltransferase of Herminiimonas arsenicoxydans.